The following is a 760-amino-acid chain: Translocation protein SEC63 homolog (760 aa).

Over Met-1 to Thr-14 the chain is Lumenal. A helical transmembrane segment spans residues Phe-15–Trp-35. Over Pro-36–Asn-69 the chain is Cytoplasmic. Residues Ile-70 to Ala-90 traverse the membrane as a helical segment. At Tyr-91–Asn-188 the chain is on the lumenal side. The 62-residue stretch at Asn-104–Gly-165 folds into the J domain. Residues Ser-189–Gly-209 traverse the membrane as a helical segment. In terms of domain architecture, SEC63 1 spans Gly-197–Leu-541. The Cytoplasmic portion of the chain corresponds to Ser-210–Asp-760. The tract at residues Ala-492 to Gln-617 is disordered. Over residues Lys-518–Pro-536 the composition is skewed to basic residues. Thr-537 carries the phosphothreonine modification. The segment covering Asn-582–Asp-608 has biased composition (basic and acidic residues). Residues Ser-597–Thr-635 are a coiled coil. Positions Pro-637–Leu-714 constitute an SEC63 2 domain. A disordered region spans residues Lys-720–Asp-760. Residues Ile-733–Asp-760 are compositionally biased toward acidic residues. Phosphoserine occurs at positions 742 and 748.

In terms of assembly, the ER translocon complex consists of channel-forming core components SEC61A1, SEC61B and SEC61G and different auxiliary components such as SEC62 and SEC63. As to expression, widely expressed, with high levels in the liver.

It localises to the endoplasmic reticulum membrane. Functionally, mediates cotranslational and post-translational transport of certain precursor polypeptides across endoplasmic reticulum (ER). Proposed to play an auxiliary role in recognition of precursors with short and apolar signal peptides. May cooperate with SEC62 and HSPA5/BiP to facilitate targeting of small presecretory proteins into the SEC61 channel-forming translocon complex, triggering channel opening for polypeptide translocation to the ER lumen. Required for efficient PKD1/Polycystin-1 biogenesis and trafficking to the plasma membrane of the primary cilia. The chain is Translocation protein SEC63 homolog from Homo sapiens (Human).